A 164-amino-acid chain; its full sequence is Transcriptional repressor NrdR (164 aa).

Residues 3–34 (CPFCRHEDSRVVDSRSLDDGSAIRRRRQCQAC) fold into a zinc finger. In terms of domain architecture, ATP-cone spans 46–136 (LTVVKRSGVA…VYRDFESLDD (91 aa)).

This sequence belongs to the NrdR family. Zn(2+) serves as cofactor.

Negatively regulates transcription of bacterial ribonucleotide reductase nrd genes and operons by binding to NrdR-boxes. This Micrococcus luteus (strain ATCC 4698 / DSM 20030 / JCM 1464 / CCM 169 / CCUG 5858 / IAM 1056 / NBRC 3333 / NCIMB 9278 / NCTC 2665 / VKM Ac-2230) (Micrococcus lysodeikticus) protein is Transcriptional repressor NrdR.